Reading from the N-terminus, the 506-residue chain is Fe(3+)-transport system permease protein FbpB 2 (506 aa).

Helical transmembrane passes span 9–29 (LTLL…YVIL), 57–77 (LLMV…AFLL), 90–110 (VAMT…WISL), 116–136 (VFWG…YLPV), 174–194 (IGSS…AVSI), 218–238 (ALLS…EIFF), 275–295 (IFIL…IVGT), 314–334 (FIIS…LVWA), 350–370 (PYLL…YFSI), 379–399 (TFFV…QTTL), 428–448 (LTLP…FLNL), and 480–500 (AAAT…VFLL). In terms of domain architecture, ABC transmembrane type-1 1 spans 52 to 233 (LSNTMLLMVC…LMAICILIVF (182 aa)). The 191-residue stretch at 310–500 (FSNSFIISGL…LFSGIPVFLL (191 aa)) folds into the ABC transmembrane type-1 2 domain.

The protein belongs to the binding-protein-dependent transport system permease family. FbpB subfamily. In terms of assembly, the complex is composed of two ATP-binding proteins (FbpC), two transmembrane proteins (FbpB) and a solute-binding protein (FbpA).

The protein localises to the cell inner membrane. Part of the ABC transporter complex FbpABC (TC 3.A.1.10.1) involved in Fe(3+) ions import. Probably responsible for the translocation of the substrate across the membrane. The protein is Fe(3+)-transport system permease protein FbpB 2 (fbpB2) of Haemophilus influenzae (strain ATCC 51907 / DSM 11121 / KW20 / Rd).